A 523-amino-acid polypeptide reads, in one-letter code: Acetyl-CoA hydrolase (523 aa).

Residue 277 to 281 participates in CoA binding; the sequence is GIGNI. E302 (5-glutamyl coenzyme A thioester intermediate) is an active-site residue. Positions 392 and 396 each coordinate CoA.

It belongs to the acetyl-CoA hydrolase/transferase family.

It localises to the cytoplasm. The catalysed reaction is acetyl-CoA + H2O = acetate + CoA + H(+). In terms of biological role, presumably involved in regulating the intracellular acetyl-CoA pool for fatty acid and cholesterol synthesis and fatty acid oxidation. This is Acetyl-CoA hydrolase (ACH1) from Eremothecium gossypii (strain ATCC 10895 / CBS 109.51 / FGSC 9923 / NRRL Y-1056) (Yeast).